The chain runs to 172 residues: Protein-export protein SecB (172 aa).

The protein belongs to the SecB family. As to quaternary structure, homotetramer, a dimer of dimers. One homotetramer interacts with 1 SecA dimer.

Its subcellular location is the cytoplasm. One of the proteins required for the normal export of preproteins out of the cell cytoplasm. It is a molecular chaperone that binds to a subset of precursor proteins, maintaining them in a translocation-competent state. It also specifically binds to its receptor SecA. This Xylella fastidiosa (strain 9a5c) protein is Protein-export protein SecB.